Reading from the N-terminus, the 171-residue chain is Co-chaperone protein HscB homolog (171 aa).

The J domain occupies 2 to 74; sequence NHFELFGLPS…ISRAEYILAE (73 aa).

The protein belongs to the HscB family. In terms of assembly, interacts with HscA and stimulates its ATPase activity.

Functionally, co-chaperone involved in the maturation of iron-sulfur cluster-containing proteins. Seems to help targeting proteins to be folded toward HscA. This chain is Co-chaperone protein HscB homolog, found in Vibrio campbellii (strain ATCC BAA-1116).